The primary structure comprises 276 residues: Pantothenate synthetase (276 aa).

27-34 (MGALHKGH) provides a ligand contact to ATP. Catalysis depends on H34, which acts as the Proton donor. Residue Q58 coordinates (R)-pantoate. Q58 is a beta-alanine binding site. Residue 147 to 150 (GKKD) coordinates ATP. (R)-pantoate is bound at residue Q153. ATP-binding positions include V176 and 184–187 (LSSR).

Belongs to the pantothenate synthetase family. Homodimer.

The protein localises to the cytoplasm. The catalysed reaction is (R)-pantoate + beta-alanine + ATP = (R)-pantothenate + AMP + diphosphate + H(+). It functions in the pathway cofactor biosynthesis; (R)-pantothenate biosynthesis; (R)-pantothenate from (R)-pantoate and beta-alanine: step 1/1. Functionally, catalyzes the condensation of pantoate with beta-alanine in an ATP-dependent reaction via a pantoyl-adenylate intermediate. This is Pantothenate synthetase from Helicobacter acinonychis (strain Sheeba).